Reading from the N-terminus, the 346-residue chain is Nuclear distribution protein nudE-like 1 (346 aa).

Residues 13-190 are a coiled coil; sequence KEEIVYWREL…LAVRERQTNG (178 aa). Disordered stretches follow at residues 184–205 and 325–346; these read RERQ…DCDK and YDPP…PLSV. Residues 188-200 are compositionally biased toward polar residues; the sequence is TNGTRKSAPSSPT. Over residues 335 to 346 the composition is skewed to pro residues; the sequence is PPSPPGMLPLSV.

It belongs to the nudE family. Phosphorylated in mitosis.

The protein localises to the cytoplasm. It localises to the cytoskeleton. The protein resides in the microtubule organizing center. It is found in the centrosome. Its subcellular location is the spindle. Its function is as follows. Required for organization of the cellular microtubule array and microtubule anchoring at the centrosome. Positively regulates the activity of the minus-end directed microtubule motor protein dynein. May enhance dynein-mediated microtubule sliding by targeting dynein to the microtubule plus end. Positively regulates lysosome peripheral distribution and ruffled border formation in osteoclasts. The chain is Nuclear distribution protein nudE-like 1 (ndel1) from Xenopus tropicalis (Western clawed frog).